The chain runs to 807 residues: MNTVLFVILLAAIGSNHGLIDERLTVNRMGYGVMFDKVSEIIDGGGIVHFSHTWSLIIPTYTIPSVENIDCTLLNAELTPICDSINNLIDSANTETYNSITDAKLRMAKALDVIPKSKPEDLINIDLGANLETTTTAAPQTGNRRRRRAAGDEPNTDDNTPPNLEIPDWLDPDKDNSDWEILIPGRLAGNLFTSIFDMPGSGTLKNSVRNLKALGGAIYTNTQSIINLNDQFAYIIQTTDKRMDEIQEMGDILVRKIAQTRASMVTFQNEFSAIYGNMSARILMLNKLKSMVVSNLYPDLFRMKVLGKDIETLCDMWTYGLINLASGYISPQLITETMMKHVIDHIVRNIIPQPTYNRFNLLSTDPAFYYKMKKMLSYARTADKVIVTINIPLYRTEGRMPLYRIYSFPIPLTMGTEDTSDKGYTKMADLPDFIAVDSNTDAYVEMTQAAYLSCSGAVSGIQSCGNAVGVTKRRDVTDMTCAFAIFIDDTTAIGKFCQTAYSDVGPVGSARQLASDSSFLISSGEDTDSFWTVNCPKSTINPISKVVPCNLCRMEISCGCSLSASHFKLNPRIGGCEKSLEGVPKTTKIYSRNMAAVTEFVTDEDLKLVNSYSARVDKLYPPIKMEKLEFKTYDNVEAYAEKSRKYGQDFIKGAELMKKNLTIYKDKVDEGLKKARDFSDQVVDREGSIINAISGLFTDIFGGEVWAVIAAIFSPVFLTAFALIISLINFIPAVRYDYKQYKKEKREKRYEEQRLALLGEADDEMKDSYGNYVKYSLPYNAATYVDIVVDEIIDPVTGERQVISRTN.

Residues 1–18 (MNTVLFVILLAAIGSNHG) form the signal peptide. Over 19-704 (LIDERLTVNR…GLFTDIFGGE (686 aa)) the chain is Extracellular. Positions 133–142 (TTTTAAPQTG) are enriched in polar residues. Residues 133 to 171 (TTTTAAPQTGNRRRRRAAGDEPNTDDNTPPNLEIPDWLD) form a disordered region. N-linked (GlcNAc...) asparagine; by host glycans are attached at residues Asn277 and Asn660. The helical transmembrane segment at 705-725 (VWAVIAAIFSPVFLTAFALII) threads the bilayer. The Cytoplasmic segment spans residues 726-807 (SLINFIPAVR…GERQVISRTN (82 aa)).

The protein localises to the host membrane. This is an uncharacterized protein from Magallana gigas (Pacific oyster).